Reading from the N-terminus, the 277-residue chain is Collectin-10 (277 aa).

The first 27 residues, 1-27 (MSRKKEQQLRKYGTLVVLFIFQVQIFG), serve as a signal peptide directing secretion. The tract at residues 41 to 82 (THTILPGPKGDDGEKGDRGEVGKQGKVGPKGPKGNKGTVGDV) is disordered. Over residues 49 to 63 (KGDDGEKGDRGEVGK) the composition is skewed to basic and acidic residues. Residues 56 to 115 (GDRGEVGKQGKVGPKGPKGNKGTVGDVGDQGMLGKIGPIGGKGDKGAKGISGVSGKKGKA) enclose the Collagen-like domain. Low complexity predominate over residues 64–79 (QGKVGPKGPKGNKGTV). The region spanning 155 to 271 (TDEKFYYIVK…CQVTIYFICE (117 aa)) is the C-type lectin domain. Intrachain disulfides connect cysteine 176/cysteine 270 and cysteine 248/cysteine 262. Asparagine 258 carries an N-linked (GlcNAc...) asparagine glycan.

The protein belongs to the COLEC10/COLEC11 family. Widely expressed. Highly expressed in lung. Weakly expressed in larynx, syrinx and cranial air sac. Expressed throughout the lower gastrointestinal tract in increasing levels starting from a faint signal in duodenum and ending with relatively high signals in proctodeum, coprodeum and urodeum. In the upper part of the gastrointestinal tract, expressed in tongue, crop, and mucosa of the crop.

Its subcellular location is the secreted. It localises to the golgi apparatus. It is found in the cytoplasm. In terms of biological role, lectin that binds to various sugars: galactose &gt; mannose = fucose &gt; N-acetylglucosamine &gt; N-acetylgalactosamine. Acts as a chemoattractant, probably involved in the regulation of cell migration. This chain is Collectin-10 (COLEC10), found in Gallus gallus (Chicken).